Consider the following 302-residue polypeptide: DNA-binding transcriptional activator HetR (302 aa).

Ser153 is a catalytic residue.

The protein belongs to the peptidase S48 family. As to quaternary structure, homodimer; disulfide-linked.

Its function is as follows. Might be involved in temporal and/or spatial regulation of nitrogen fixation. Dimerization is required for DNA-binding. Has both a protease and a DNA-binding activity. The protein is DNA-binding transcriptional activator HetR of Trichodesmium erythraeum (strain IMS101).